The chain runs to 156 residues: Cytochrome c-type biogenesis protein CcmE (156 aa).

The Cytoplasmic portion of the chain corresponds to 1-16; it reads MNATKAPGGIKPKHQR. The chain crosses the membrane as a helical; Signal-anchor for type II membrane protein span at residues 17–37; that stretch reads LVLLVIALVALIGAGLLAAYA. Residues 38-156 lie on the Periplasmic side of the membrane; it reads LSNQASYFYV…QAEAVVAETK (119 aa). Residues His-131 and Tyr-135 each contribute to the heme site.

It belongs to the CcmE/CycJ family.

The protein resides in the cell inner membrane. Its function is as follows. Heme chaperone required for the biogenesis of c-type cytochromes. Transiently binds heme delivered by CcmC and transfers the heme to apo-cytochromes in a process facilitated by CcmF and CcmH. This Novosphingobium aromaticivorans (strain ATCC 700278 / DSM 12444 / CCUG 56034 / CIP 105152 / NBRC 16084 / F199) protein is Cytochrome c-type biogenesis protein CcmE.